The primary structure comprises 147 residues: Small ribosomal subunit protein bS6 (147 aa).

The disordered stretch occupies residues 114-147 (GKGTRAAEQAAAAEAAAPAAAPAEPASAEPAPAV). Positions 119-147 (AAEQAAAAEAAAPAAAPAEPASAEPAPAV) are enriched in low complexity.

It belongs to the bacterial ribosomal protein bS6 family.

Functionally, binds together with bS18 to 16S ribosomal RNA. The chain is Small ribosomal subunit protein bS6 from Koribacter versatilis (strain Ellin345).